The primary structure comprises 201 residues: Translation initiation factor IF-3 (201 aa).

The protein belongs to the IF-3 family. As to quaternary structure, monomer.

It is found in the cytoplasm. In terms of biological role, IF-3 binds to the 30S ribosomal subunit and shifts the equilibrium between 70S ribosomes and their 50S and 30S subunits in favor of the free subunits, thus enhancing the availability of 30S subunits on which protein synthesis initiation begins. In Mycoplasma pneumoniae (strain ATCC 29342 / M129 / Subtype 1) (Mycoplasmoides pneumoniae), this protein is Translation initiation factor IF-3.